A 506-amino-acid chain; its full sequence is Tyrosine-protein phosphatase non-receptor type substrate 1 (506 aa).

The signal sequence occupies residues 1–29; the sequence is MEPARPAPGRLRPLLCLLLAASNAWTGTA. The 116-residue stretch at 30–145 folds into the Ig-like V-type domain; sequence GDGELQVIQP…SGPGTHLTVS (116 aa). Residues 30-371 lie on the Extracellular side of the membrane; sequence GDGELQVIQP…PGPNDSNWTS (342 aa). Residues Cys55 and Cys121 are joined by a disulfide bond. N-linked (GlcNAc...) asparagine glycosylation is present at Asn92. A disordered region spans residues 136–159; it reads SGPGTHLTVSAKPSPPVLSGPTVR. 2 Ig-like C1-type domains span residues 148 to 248 and 255 to 348; these read PSPP…ANLS and PTLE…HTLE. N-linked (GlcNAc...) asparagine glycans are attached at residues Asn167, Asn179, Asn204, Asn210, Asn246, Asn270, Asn292, Asn311, Asn319, Asn344, Asn365, and Asn368. A disulfide bridge links Cys170 with Cys228. Cys273 and Cys331 form a disulfide bridge. The interval 344–364 is disordered; the sequence is NHTLEVSAPQKDQDTGQTPGP. A helical membrane pass occupies residues 372–392; that stretch reads IFIVVGVVCALLVALLIAALY. Residues 393–506 are Cytoplasmic-facing; sequence LLRIRQNKAK…EYASVQVQRK (114 aa). The disordered stretch occupies residues 402 to 468; the sequence is KGSTSSTRLH…QARPPPVSED (67 aa). Over residues 409 to 418 the composition is skewed to basic and acidic residues; sequence RLHEPEKNTR. The span at 419-429 shows a compositional bias: polar residues; the sequence is ETTQIQDNNDI. Tyr431 carries the phosphotyrosine; by Tyr-kinases modification. Residues 432-435 carry the SH2-binding motif; that stretch reads ADLN. The SH3-binding motif lies at 441–446; it reads KSTPKA. A compositionally biased stretch (polar residues) spans 444 to 456; the sequence is PKANEPNNHTEYA. Tyr455, Tyr472, and Tyr498 each carry phosphotyrosine; by Tyr-kinases. 3 consecutive short sequence motifs (SH2-binding) follow at residues 455-458, 472-475, and 498-501; these read YASI, YADL, and YASV. A disordered region spans residues 480 to 506; it reads LNRTPKQPAPKPEPSYSEYASVQVQRK. Residues 497 to 506 are compositionally biased toward polar residues; the sequence is EYASVQVQRK.

Binds PTPN11 when tyrosine-phosphorylated, except in macrophages, where it primarily binds PTPN6. Binds GRB2 in vitro. Binds JAK2 irrespective of its phosphorylation status and forms a stable complex. Binds SCAP1 and/or SCAP2. The resulting complex recruits FYB1. Binds FGR and PTK2B. Interacts with TRIM2. Phosphorylated on tyrosine residues. As to expression, highly expressed in spleen macrophages. Detected in skin dendritic cells.

The protein localises to the membrane. Immunoglobulin-like cell surface receptor for CD47. Acts as docking protein and induces translocation of PTPN6, PTPN11 and other binding partners from the cytosol to the plasma membrane. Supports adhesion of cerebellar neurons, neurite outgrowth and glial cell attachment. May play a key role in intracellular signaling during synaptogenesis and in synaptic function. Involved in the negative regulation of receptor tyrosine kinase-coupled cellular responses induced by cell adhesion, growth factors or insulin. Mediates negative regulation of phagocytosis, mast cell activation and dendritic cell activation. CD47 binding prevents maturation of immature dendritic cells and inhibits cytokine production by mature dendritic cells. Plays a role in antiviral immunity and limits new world arenavirus infection by decreasing virus internalization. Receptor for THBS1. Interaction with THBS1 stimulates phosphorylation of SIRPA. In response to THBS1, involved in ROS signaling in non-phagocytic cells, stimulating NADPH oxidase-derived ROS production. The protein is Tyrosine-protein phosphatase non-receptor type substrate 1 (SIRPA) of Bos taurus (Bovine).